A 252-amino-acid chain; its full sequence is Accessory gland protein Acp32CD (252 aa).

The first 19 residues, 1 to 19 (MWRMRMRLLTGYLVLLALG), serve as a signal peptide directing secretion. The tract at residues 42 to 252 (PDGEGGTGVD…GAKEDDYEEM (211 aa)) is disordered. Over residues 44 to 69 (GEGGTGVDGGGGGAGGGAAGPGGGTG) the composition is skewed to gly residues. Composition is skewed to basic and acidic residues over residues 104 to 122 (AIGKKESGGGSDGKSDSKD), 142 to 153 (SDSKDAKDRQDK), 159 to 171 (QEGKRTDHSHHSS), and 209 to 225 (NGARESSQENQDAKEVA).

Seminal fluid.

It is found in the secreted. Responsible for physiological and behavioral changes in mated female flies. The sequence is that of Accessory gland protein Acp32CD (Acp32CD) from Drosophila melanogaster (Fruit fly).